The chain runs to 190 residues: dCTP deaminase, dUMP-forming (190 aa).

Residues 101–106 (KSSLGR), Asp-119, 127–129 (TLE), Gln-148, Tyr-162, and Gln-174 contribute to the dCTP site. The Proton donor/acceptor role is filled by Glu-129. A disordered region spans residues 162-190 (YGSASAGSKYQGQRGPTPSRSYENFIKNT). The span at 166–190 (SAGSKYQGQRGPTPSRSYENFIKNT) shows a compositional bias: polar residues.

The protein belongs to the dCTP deaminase family. Homotrimer.

The catalysed reaction is dCTP + 2 H2O = dUMP + NH4(+) + diphosphate. It participates in pyrimidine metabolism; dUMP biosynthesis; dUMP from dCTP: step 1/1. Functionally, bifunctional enzyme that catalyzes both the deamination of dCTP to dUTP and the hydrolysis of dUTP to dUMP without releasing the toxic dUTP intermediate. This is dCTP deaminase, dUMP-forming from Mycobacterium leprae (strain Br4923).